A 322-amino-acid chain; its full sequence is Myeloid-associated differentiation marker (322 aa).

Residues 1 to 18 (MPVTVTRTTITTTTTSSS) are compositionally biased toward low complexity. The interval 1-21 (MPVTVTRTTITTTTTSSSGLG) is disordered. S22 bears the Phosphoserine mark. 2 consecutive MARVEL domains span residues 31-163 (ALTQ…ARPG) and 168-319 (YMAT…HLVF). The next 8 helical transmembrane spans lie at 41–61 (LLQL…GAWT), 70–90 (FTWC…LCGL), 101–121 (FPIT…IIYP), 137–157 (AIAA…EVAW), 171–191 (TVPG…FAFI), 203–223 (LEWC…AILL), 239–259 (FLSG…VLWP), and 294–314 (LAVA…LVHS).

This sequence belongs to the MAL family. Widely expressed. Not detected in thymus.

The protein resides in the membrane. In Homo sapiens (Human), this protein is Myeloid-associated differentiation marker (MYADM).